Consider the following 202-residue polypeptide: dITP/XTP pyrophosphatase (202 aa).

A substrate-binding site is contributed by 10-15 (TGNAGK). 2 residues coordinate Mg(2+): D46 and D75. Residue D75 is the Proton acceptor of the active site. Substrate-binding positions include S76, 160–163 (FGYD), K183, and 188–189 (HR).

Belongs to the HAM1 NTPase family. As to quaternary structure, homodimer. It depends on Mg(2+) as a cofactor.

The enzyme catalyses XTP + H2O = XMP + diphosphate + H(+). It catalyses the reaction dITP + H2O = dIMP + diphosphate + H(+). The catalysed reaction is ITP + H2O = IMP + diphosphate + H(+). Functionally, pyrophosphatase that catalyzes the hydrolysis of nucleoside triphosphates to their monophosphate derivatives, with a high preference for the non-canonical purine nucleotides XTP (xanthosine triphosphate), dITP (deoxyinosine triphosphate) and ITP. Seems to function as a house-cleaning enzyme that removes non-canonical purine nucleotides from the nucleotide pool, thus preventing their incorporation into DNA/RNA and avoiding chromosomal lesions. The sequence is that of dITP/XTP pyrophosphatase from Idiomarina loihiensis (strain ATCC BAA-735 / DSM 15497 / L2-TR).